Here is a 386-residue protein sequence, read N- to C-terminus: O-methyltransferase 12 (386 aa).

S207, G231, D254, D274, and K288 together coordinate S-adenosyl-L-homocysteine. D254 provides a ligand contact to S-adenosyl-L-methionine. H292 acts as the Proton acceptor in catalysis.

The protein belongs to the class I-like SAM-binding methyltransferase superfamily. Cation-independent O-methyltransferase family. Homodimer. As to expression, expressed at high levels in all tissues.

The catalysed reaction is 4-hydroxy-3,5-dimethoxyphenethylamine + S-adenosyl-L-methionine = mescaline + S-adenosyl-L-homocysteine + H(+). It catalyses the reaction dopamine + S-adenosyl-L-methionine = 4-methoxytyramine + S-adenosyl-L-homocysteine + H(+). The protein operates within aromatic compound metabolism. It functions in the pathway alkaloid biosynthesis. Functionally, O-methyltransferase participating in the biosynthesis of natural products derived from phenylethylamine, including mescaline, a natural hallucinogen potentially used in psychotherapeutic treatments. Catalyzes the O-methylation of dopamine, 4-hydroxy-3,5-dimethoxyphenethylamine, 4,5-dihydroxy-3-methoxyphenethylamine and N-methyl-4,5-dihydroxy-3-methoxyphenethylamine. Also involved in the conversion of N-methyl-4-hydroxy-3,5-dimethoxyphenethylamine to N-methylmescaline. In Lophophora williamsii (Peyote), this protein is O-methyltransferase 12.